A 127-amino-acid chain; its full sequence is Small ribosomal subunit protein uS12 (127 aa).

Aspartate 89 carries the 3-methylthioaspartic acid modification. Positions 101 to 127 (ALDTSGVAGRTQRRSKYGAKRPKEAKK) are disordered. The span at 111-127 (TQRRSKYGAKRPKEAKK) shows a compositional bias: basic residues.

Belongs to the universal ribosomal protein uS12 family. In terms of assembly, part of the 30S ribosomal subunit. Contacts proteins S8 and S17. May interact with IF1 in the 30S initiation complex.

Functionally, with S4 and S5 plays an important role in translational accuracy. Its function is as follows. Interacts with and stabilizes bases of the 16S rRNA that are involved in tRNA selection in the A site and with the mRNA backbone. Located at the interface of the 30S and 50S subunits, it traverses the body of the 30S subunit contacting proteins on the other side and probably holding the rRNA structure together. The combined cluster of proteins S8, S12 and S17 appears to hold together the shoulder and platform of the 30S subunit. This is Small ribosomal subunit protein uS12 from Flavobacterium psychrophilum (strain ATCC 49511 / DSM 21280 / CIP 103535 / JIP02/86).